The chain runs to 227 residues: Orotidine 5'-phosphate decarboxylase (227 aa).

Residues Asp8, Lys30, Asp59–Thr68, Thr118, Arg178, Gln187, Gly207, and Arg208 contribute to the substrate site. Residue Lys61 is the Proton donor of the active site.

It belongs to the OMP decarboxylase family. Type 1 subfamily. Homodimer.

It catalyses the reaction orotidine 5'-phosphate + H(+) = UMP + CO2. Its pathway is pyrimidine metabolism; UMP biosynthesis via de novo pathway; UMP from orotate: step 2/2. Its function is as follows. Catalyzes the decarboxylation of orotidine 5'-monophosphate (OMP) to uridine 5'-monophosphate (UMP). In Helicobacter pylori (strain Shi470), this protein is Orotidine 5'-phosphate decarboxylase.